A 608-amino-acid chain; its full sequence is Glutamine--fructose-6-phosphate aminotransferase [isomerizing] (608 aa).

C2 functions as the Nucleophile; for GATase activity in the catalytic mechanism. The 216-residue stretch at 2 to 217 (CGIVGIVGNQ…DGDWAVIGKT (216 aa)) folds into the Glutamine amidotransferase type-2 domain. SIS domains lie at 281-422 (ISDA…ARGT) and 456-598 (LSRE…VDQP). K603 serves as the catalytic For Fru-6P isomerization activity.

It is found in the cytoplasm. It catalyses the reaction D-fructose 6-phosphate + L-glutamine = D-glucosamine 6-phosphate + L-glutamate. Involved in the production of the root hair deformation (HAD) factor specifically on medicago. The polypeptide is Glutamine--fructose-6-phosphate aminotransferase [isomerizing] (nodM) (Rhizobium meliloti (strain 1021) (Ensifer meliloti)).